Here is a 456-residue protein sequence, read N- to C-terminus: Argininosuccinate lyase (456 aa).

This sequence belongs to the lyase 1 family. Argininosuccinate lyase subfamily.

It is found in the cytoplasm. The enzyme catalyses 2-(N(omega)-L-arginino)succinate = fumarate + L-arginine. It functions in the pathway amino-acid biosynthesis; L-arginine biosynthesis; L-arginine from L-ornithine and carbamoyl phosphate: step 3/3. In Listeria monocytogenes serotype 4b (strain F2365), this protein is Argininosuccinate lyase.